The chain runs to 232 residues: Phosphatidylserine decarboxylase proenzyme (232 aa).

Residue S190 is the Schiff-base intermediate with substrate; via pyruvic acid of the active site. S190 carries the post-translational modification Pyruvic acid (Ser); by autocatalysis.

This sequence belongs to the phosphatidylserine decarboxylase family. PSD-A subfamily. As to quaternary structure, heterodimer of a large membrane-associated beta subunit and a small pyruvoyl-containing alpha subunit. The cofactor is pyruvate. Is synthesized initially as an inactive proenzyme. Formation of the active enzyme involves a self-maturation process in which the active site pyruvoyl group is generated from an internal serine residue via an autocatalytic post-translational modification. Two non-identical subunits are generated from the proenzyme in this reaction, and the pyruvate is formed at the N-terminus of the alpha chain, which is derived from the carboxyl end of the proenzyme. The post-translation cleavage follows an unusual pathway, termed non-hydrolytic serinolysis, in which the side chain hydroxyl group of the serine supplies its oxygen atom to form the C-terminus of the beta chain, while the remainder of the serine residue undergoes an oxidative deamination to produce ammonia and the pyruvoyl prosthetic group on the alpha chain.

It localises to the cell membrane. It catalyses the reaction a 1,2-diacyl-sn-glycero-3-phospho-L-serine + H(+) = a 1,2-diacyl-sn-glycero-3-phosphoethanolamine + CO2. Its pathway is phospholipid metabolism; phosphatidylethanolamine biosynthesis; phosphatidylethanolamine from CDP-diacylglycerol: step 2/2. Its function is as follows. Catalyzes the formation of phosphatidylethanolamine (PtdEtn) from phosphatidylserine (PtdSer). This is Phosphatidylserine decarboxylase proenzyme from Afipia carboxidovorans (strain ATCC 49405 / DSM 1227 / KCTC 32145 / OM5) (Oligotropha carboxidovorans).